Reading from the N-terminus, the 466-residue chain is Dihydrolipoyl dehydrogenase (466 aa).

FAD contacts are provided by residues 34–42 (ERVHLGGIC), K51, and G114. Residues C42 and C47 are joined by a disulfide bond. NAD(+) contacts are provided by residues 180–184 (GSGAI), E203, and 269–272 (AIGV). FAD contacts are provided by D311 and A319. H445 acts as the Proton acceptor in catalysis.

Belongs to the class-I pyridine nucleotide-disulfide oxidoreductase family. As to quaternary structure, homodimer. It depends on FAD as a cofactor.

It localises to the cytoplasm. The enzyme catalyses N(6)-[(R)-dihydrolipoyl]-L-lysyl-[protein] + NAD(+) = N(6)-[(R)-lipoyl]-L-lysyl-[protein] + NADH + H(+). In terms of biological role, lipoamide dehydrogenase is a component of the alpha-ketoacid dehydrogenase complexes. The sequence is that of Dihydrolipoyl dehydrogenase (lpd) from Zymomonas mobilis subsp. mobilis (strain ATCC 31821 / ZM4 / CP4).